We begin with the raw amino-acid sequence, 191 residues long: uncharacterized protein (191 aa).

5 helical membrane-spanning segments follow: residues Ile24–Gly44, Ile51–Phe71, Leu114–Phe134, Ala139–Gly159, and Ile167–Ile187.

Its subcellular location is the cell membrane. This is an uncharacterized protein from Methanocaldococcus jannaschii (strain ATCC 43067 / DSM 2661 / JAL-1 / JCM 10045 / NBRC 100440) (Methanococcus jannaschii).